Reading from the N-terminus, the 466-residue chain is Ribulose bisphosphate carboxylase large chain (466 aa).

Lysine 5 carries the N6,N6,N6-trimethyllysine modification. Substrate contacts are provided by asparagine 114 and threonine 164. Lysine 166 (proton acceptor) is an active-site residue. Lysine 168 contributes to the substrate binding site. Mg(2+)-binding residues include lysine 192, aspartate 194, and glutamate 195. N6-carboxylysine is present on lysine 192. Histidine 285 (proton acceptor) is an active-site residue. Positions 286, 318, and 370 each coordinate substrate.

The protein belongs to the RuBisCO large chain family. Type I subfamily. In terms of assembly, heterohexadecamer of 8 large chains and 8 small chains; disulfide-linked. The disulfide link is formed within the large subunit homodimers. Mg(2+) is required as a cofactor. The disulfide bond which can form in the large chain dimeric partners within the hexadecamer appears to be associated with oxidative stress and protein turnover.

It localises to the plastid. The protein resides in the chloroplast. It catalyses the reaction 2 (2R)-3-phosphoglycerate + 2 H(+) = D-ribulose 1,5-bisphosphate + CO2 + H2O. The catalysed reaction is D-ribulose 1,5-bisphosphate + O2 = 2-phosphoglycolate + (2R)-3-phosphoglycerate + 2 H(+). Functionally, ruBisCO catalyzes two reactions: the carboxylation of D-ribulose 1,5-bisphosphate, the primary event in carbon dioxide fixation, as well as the oxidative fragmentation of the pentose substrate in the photorespiration process. Both reactions occur simultaneously and in competition at the same active site. This is Ribulose bisphosphate carboxylase large chain from Aesculus pavia (Red buckeye).